Consider the following 183-residue polypeptide: Ran guanine nucleotide release factor (183 aa).

The interaction with RAN stretch occupies residues 23–66; that stretch reads ELRQIPDNQEVFAHSQTDQSIIIELLEYQSQVQDADAARYHFED.

This sequence belongs to the MOG1 family. Monomer. Interacts with ran.

The protein localises to the nucleus. It is found in the cytoplasm. Its subcellular location is the perinuclear region. The protein resides in the cell membrane. In terms of biological role, may regulate the intracellular trafficking of RAN. Promotes guanine nucleotide release from RAN and inhibits binding of new GTP. Plays a role in the regulation of the levels of GTP-bound RAN in the nucleus. Required for normal expression of the ion channel hcn4 and for normal expression of the cardiac transcription factors nkx2.5, gata4 and hand2 during embryonic development. Required for normal embryonic heart development and normal heart rate. This is Ran guanine nucleotide release factor from Danio rerio (Zebrafish).